A 145-amino-acid polypeptide reads, in one-letter code: Protein BUD31 homolog 2 (145 aa).

Belongs to the BUD31 (G10) family.

It is found in the nucleus. The polypeptide is Protein BUD31 homolog 2 (Oryza sativa subsp. japonica (Rice)).